We begin with the raw amino-acid sequence, 858 residues long: Coiled-coil and C2 domain-containing protein 1B (858 aa).

5 disordered regions span residues 112–164 (VLGV…GASQ), 180–199 (AAAS…CERG), 204–284 (ESQL…ALLS), 329–352 (VDLS…APTA), and 470–533 (EKLA…SPSV). Residues 114-143 (GVDEETEPLDGDEVADPGGSEEENGLEDTE) show a composition bias toward acidic residues. Residues 153 to 164 (ASAPAAQAGASQ) show a composition bias toward low complexity. A coiled-coil region spans residues 166 to 212 (LHALLEERIHNYREAAASAKEAGEAAKARRCERGLKTLESQLASVRR). Positions 186–199 (EAGEAAKARRCERG) are enriched in basic and acidic residues. Position 209 is a phosphoserine (Ser-209). Residues 520-532 (PRASSSKESPSPS) are compositionally biased toward low complexity. Ser-593 is modified (phosphoserine). At Thr-596 the chain carries Phosphothreonine. The stretch at 611-635 (RLSQKAEEVYAQLQKMLLEQQEKCL) forms a coiled coil. A C2 domain is found at 676–815 (DPPTHHFELK…ENECEIREIV (140 aa)).

The protein belongs to the CC2D1 family. In terms of assembly, interacts with CHMP4B. As to expression, widely distributed in brain and peripheral tissues.

Its subcellular location is the nucleus. Its function is as follows. Transcription factor that binds specifically to the DRE (dual repressor element) and represses HTR1A gene transcription in neuronal cells. This Homo sapiens (Human) protein is Coiled-coil and C2 domain-containing protein 1B (CC2D1B).